The sequence spans 1042 residues: Atrial natriuretic peptide-converting enzyme (1042 aa).

Positions 1–25 (MKQSPALAPEERCRRAGSPKPVLRA) are disordered. The Cytoplasmic segment spans residues 1–45 (MKQSPALAPEERCRRAGSPKPVLRADDNNMGNGCSQKLATANLLR). Residues 26-29 (DDNN) carry the DDNN motif motif. Residues 46–66 (FLLLVLIPCICALVLLLVILL) traverse the membrane as a helical; Signal-anchor for type II membrane protein segment. Topologically, residues 67 to 1042 (SYVGTLQKVY…QIYIQTFLLN (976 aa)) are extracellular. Residues Asn-80, Asn-104, Asn-135, and Asn-141 are each glycosylated (N-linked (GlcNAc...) asparagine). The 126-residue stretch at 134–259 (RNTSACMNIT…SNVSRICFSP (126 aa)) folds into the FZ 1 domain. 8 disulfide bridges follow: Cys-139–Cys-199, Cys-147–Cys-192, Cys-183–Cys-223, Cys-212–Cys-256, Cys-216–Cys-240, Cys-269–Cys-282, Cys-277–Cys-295, and Cys-289–Cys-304. N-linked (GlcNAc...) asparagine glycosylation is found at Asn-231, Asn-245, and Asn-251. LDL-receptor class A domains lie at 268-304 (LCGR…EAHC), 305-340 (NCSE…EQNC), 341-377 (DCNP…EVNC), and 378-415 (SCHS…ENCS). Residue Asn-305 is glycosylated (N-linked (GlcNAc...) asparagine). 9 disulfides stabilise this stretch: Cys-306/Cys-318, Cys-313/Cys-331, Cys-325/Cys-340, Cys-342/Cys-355, Cys-350/Cys-368, Cys-362/Cys-377, Cys-379/Cys-392, Cys-387/Cys-405, and Cys-399/Cys-414. N-linked (GlcNAc...) asparagine glycosylation occurs at Asn-320. An N-linked (GlcNAc...) asparagine glycan is attached at Asn-376. Asn-413, Asn-446, Asn-451, and Asn-469 each carry an N-linked (GlcNAc...) asparagine glycan. Residues 450–573 (NNCSQCEPIT…NSDNQTCLMP (124 aa)) enclose the FZ 2 domain. 14 disulfides stabilise this stretch: Cys-455-Cys-518, Cys-463-Cys-511, Cys-502-Cys-540, Cys-529-Cys-570, Cys-533-Cys-557, Cys-580-Cys-592, Cys-587-Cys-605, Cys-599-Cys-614, Cys-616-Cys-630, Cys-624-Cys-643, Cys-637-Cys-652, Cys-655-Cys-667, Cys-662-Cys-680, and Cys-674-Cys-689. Asn-567 is a glycosylation site (N-linked (GlcNAc...) asparagine). LDL-receptor class A domains are found at residues 579 to 614 (ECSP…EENC), 615 to 653 (GCKE…KNCS), and 654 to 689 (FCQD…EWDC). N-linked (GlcNAc...) asparagine glycosylation occurs at Asn-651. The region spanning 690–801 (VTLSINVNSS…RRPAARMNKR (112 aa)) is the SRCR domain. Asn-697 and Asn-761 each carry an N-linked (GlcNAc...) asparagine glycan. Disulfide bonds link Cys-790/Cys-912, Cys-828/Cys-844, Cys-926/Cys-991, Cys-955/Cys-970, and Cys-981/Cys-1010. Residues 802 to 1035 (ILGGRTSRPG…FVEWIKRQIY (234 aa)) form the Peptidase S1 domain. Active-site charge relay system residues include His-843 and Asp-892. Ser-985 acts as the Charge relay system in catalysis. An N-linked (GlcNAc...) asparagine glycan is attached at Asn-1022.

Belongs to the peptidase S1 family. Post-translationally, N-glycosylated; required for processing and activation. In terms of processing, activated through proteolytic processing by a trypsin-like protease; cleaved into a N-terminal propeptide and an activated corin protease fragment. Different soluble forms are produced by cleavage and autocatalytic cleavage: Atrial natriuretic peptide-converting enzyme, 180 kDa soluble fragment is produced by cleavage by ADAM10, while 160 kDa and 100 kDa soluble fragments are produced by autocatalytic cleavage. Cleavage by ADAM10 to produce soluble 180 kDa soluble fragment takes place after the transmembrane region and before FZ 1. A disulfide bond links the activated corin protease fragment and the N-terminal propeptide. The disulfide bond also links the activated corin protease fragment with soluble fragments (100 kDa, 160 kDa and 180 kDa fragments). As to expression, highly expressed in heart. Expressed in heart myocytes. Also expressed in pregnant uterus. Detected in blood, in plasma as well as in serum (at protein level).

The protein resides in the cell membrane. Its subcellular location is the secreted. Its activity is regulated as follows. Inhibited in a dose-dependent manner by non-specific trypsin-like serine protease inhibitors including benzamidine. Its function is as follows. Serine-type endopeptidase involved in atrial natriuretic peptide (NPPA) and brain natriuretic peptide (NPPB) processing. Converts through proteolytic cleavage the non-functional propeptides NPPA and NPPB into their active hormones, ANP and BNP(1-32) respectively, thereby regulating blood pressure in the heart and promoting natriuresis, diuresis and vasodilation. Proteolytic cleavage of pro-NPPA also plays a role in female pregnancy by promoting trophoblast invasion and spiral artery remodeling in uterus. Also acts as a regulator of sodium reabsorption in kidney. Has weaker endopeptidase activity compared to isoform 1. The chain is Atrial natriuretic peptide-converting enzyme (CORIN) from Homo sapiens (Human).